The following is an 887-amino-acid chain: Alanine--tRNA ligase (887 aa).

Residues histidine 564, histidine 568, cysteine 676, and histidine 680 each contribute to the Zn(2+) site. Residues 854-873 (GQGGGGRPDMAQSGGPKGNK) are disordered.

Belongs to the class-II aminoacyl-tRNA synthetase family. It depends on Zn(2+) as a cofactor.

It localises to the cytoplasm. The enzyme catalyses tRNA(Ala) + L-alanine + ATP = L-alanyl-tRNA(Ala) + AMP + diphosphate. In terms of biological role, catalyzes the attachment of alanine to tRNA(Ala) in a two-step reaction: alanine is first activated by ATP to form Ala-AMP and then transferred to the acceptor end of tRNA(Ala). Also edits incorrectly charged Ser-tRNA(Ala) and Gly-tRNA(Ala) via its editing domain. This Bartonella henselae (strain ATCC 49882 / DSM 28221 / CCUG 30454 / Houston 1) (Rochalimaea henselae) protein is Alanine--tRNA ligase.